A 349-amino-acid polypeptide reads, in one-letter code: Isopentenyl-diphosphate delta-isomerase (349 aa).

6-7 (RK) provides a ligand contact to substrate. Residues 62-64 (AMT), serine 93, and asparagine 122 contribute to the FMN site. Glutamine 152 serves as a coordination point for substrate. Residue glutamate 153 participates in Mg(2+) binding. FMN is bound by residues lysine 184, threonine 214, 258 to 259 (GG), and 280 to 281 (AG).

Belongs to the IPP isomerase type 2 family. In terms of assembly, homooctamer. Dimer of tetramers. It depends on FMN as a cofactor. NADPH serves as cofactor. The cofactor is Mg(2+).

It is found in the cytoplasm. The enzyme catalyses isopentenyl diphosphate = dimethylallyl diphosphate. In terms of biological role, involved in the biosynthesis of isoprenoids. Catalyzes the 1,3-allylic rearrangement of the homoallylic substrate isopentenyl (IPP) to its allylic isomer, dimethylallyl diphosphate (DMAPP). In Bacillus cereus (strain 03BB102), this protein is Isopentenyl-diphosphate delta-isomerase.